The following is a 488-amino-acid chain: Protein nucleotidyltransferase YdiU (488 aa).

Residues Gly90, Gly92, Arg93, Lys113, Asp125, Gly126, Arg176, and Arg183 each contribute to the ATP site. The Proton acceptor role is filled by Asp252. Residues Asn253 and Asp262 each coordinate Mg(2+). Asp262 contacts ATP.

Belongs to the SELO family. It depends on Mg(2+) as a cofactor. Mn(2+) is required as a cofactor.

The enzyme catalyses L-seryl-[protein] + ATP = 3-O-(5'-adenylyl)-L-seryl-[protein] + diphosphate. It carries out the reaction L-threonyl-[protein] + ATP = 3-O-(5'-adenylyl)-L-threonyl-[protein] + diphosphate. The catalysed reaction is L-tyrosyl-[protein] + ATP = O-(5'-adenylyl)-L-tyrosyl-[protein] + diphosphate. It catalyses the reaction L-histidyl-[protein] + UTP = N(tele)-(5'-uridylyl)-L-histidyl-[protein] + diphosphate. The enzyme catalyses L-seryl-[protein] + UTP = O-(5'-uridylyl)-L-seryl-[protein] + diphosphate. It carries out the reaction L-tyrosyl-[protein] + UTP = O-(5'-uridylyl)-L-tyrosyl-[protein] + diphosphate. Nucleotidyltransferase involved in the post-translational modification of proteins. It can catalyze the addition of adenosine monophosphate (AMP) or uridine monophosphate (UMP) to a protein, resulting in modifications known as AMPylation and UMPylation. The sequence is that of Protein nucleotidyltransferase YdiU from Thiobacillus denitrificans (strain ATCC 25259 / T1).